We begin with the raw amino-acid sequence, 360 residues long: UDP-N-acetylglucosamine--N-acetylmuramyl-(pentapeptide) pyrophosphoryl-undecaprenol N-acetylglucosamine transferase (360 aa).

UDP-N-acetyl-alpha-D-glucosamine-binding positions include 15–17 (TGG), Asn128, Arg164, Ser192, Ile247, and Gln292.

Belongs to the glycosyltransferase 28 family. MurG subfamily.

The protein resides in the cell inner membrane. The catalysed reaction is di-trans,octa-cis-undecaprenyl diphospho-N-acetyl-alpha-D-muramoyl-L-alanyl-D-glutamyl-meso-2,6-diaminopimeloyl-D-alanyl-D-alanine + UDP-N-acetyl-alpha-D-glucosamine = di-trans,octa-cis-undecaprenyl diphospho-[N-acetyl-alpha-D-glucosaminyl-(1-&gt;4)]-N-acetyl-alpha-D-muramoyl-L-alanyl-D-glutamyl-meso-2,6-diaminopimeloyl-D-alanyl-D-alanine + UDP + H(+). It functions in the pathway cell wall biogenesis; peptidoglycan biosynthesis. In terms of biological role, cell wall formation. Catalyzes the transfer of a GlcNAc subunit on undecaprenyl-pyrophosphoryl-MurNAc-pentapeptide (lipid intermediate I) to form undecaprenyl-pyrophosphoryl-MurNAc-(pentapeptide)GlcNAc (lipid intermediate II). The sequence is that of UDP-N-acetylglucosamine--N-acetylmuramyl-(pentapeptide) pyrophosphoryl-undecaprenol N-acetylglucosamine transferase from Blochmanniella floridana.